Reading from the N-terminus, the 503-residue chain is Galactose/methyl galactoside import ATP-binding protein MglA 2 (503 aa).

2 ABC transporter domains span residues 11–246 (LEMT…VGRE) and 257–503 (TPKE…SRYL). 43-50 (GENGAGKS) lines the ATP pocket.

Belongs to the ABC transporter superfamily. Galactose/methyl galactoside importer (TC 3.A.1.2.3) family. As to quaternary structure, the complex is composed of one ATP-binding protein (MglA), two transmembrane proteins (MglC) and a solute-binding protein (MglB).

It localises to the cell inner membrane. The enzyme catalyses D-galactose(out) + ATP + H2O = D-galactose(in) + ADP + phosphate + H(+). The catalysed reaction is methyl beta-D-galactoside(out) + ATP + H2O = methyl beta-D-galactoside(in) + ADP + phosphate + H(+). In terms of biological role, part of the ABC transporter complex MglABC involved in galactose/methyl galactoside import. Responsible for energy coupling to the transport system. The sequence is that of Galactose/methyl galactoside import ATP-binding protein MglA 2 from Photobacterium profundum (strain SS9).